A 251-amino-acid polypeptide reads, in one-letter code: MLYIVGIGPGPGYATERAIRAIEEADCVFYEDYTGPIDVETLRRAAKTPPIRLTRRDLEDESGRKVLECLREGKRAVLATAGDPMLATAHAALIAAARARGHPVEVVPGVSIICAAFSAACLSIYKLGGVATVTYPRGGVYSTRPYELAEANLARGLHTLLLLDVREDGSFMPPRDAAEVLMALEERERRGVFTPQRPAVVVHRLGWGGGVVVGPLGAVAKWDGEGPAVLIIPAQLGPVEKECLEAVAQRI.

Residues Asp83, Leu86, 111-112 (SI), Leu163, and Leu205 each bind S-adenosyl-L-methionine.

Belongs to the diphthine synthase family. As to quaternary structure, homodimer.

The catalysed reaction is 2-[(3S)-amino-3-carboxypropyl]-L-histidyl-[translation elongation factor 2] + 3 S-adenosyl-L-methionine = diphthine-[translation elongation factor 2] + 3 S-adenosyl-L-homocysteine + 3 H(+). Its pathway is protein modification; peptidyl-diphthamide biosynthesis. Its function is as follows. S-adenosyl-L-methionine-dependent methyltransferase that catalyzes the trimethylation of the amino group of the modified target histidine residue in translation elongation factor 2 (EF-2), to form an intermediate called diphthine. The three successive methylation reactions represent the second step of diphthamide biosynthesis. The polypeptide is Diphthine synthase (Pyrobaculum calidifontis (strain DSM 21063 / JCM 11548 / VA1)).